The sequence spans 75 residues: Supwaprin-a (75 aa).

Positions 1–24 are cleaved as a signal peptide; sequence MSSGGLLLLLGFLTLWAELTPVSG. Residues 27-72 form the WAP domain; it reads RPKKPGLCPPRPQKPPCVRECKNDWSCPGEQKCCRYGCIFECRDPI. Cystine bridges form between Cys-34–Cys-60, Cys-43–Cys-64, Cys-47–Cys-59, and Cys-53–Cys-68.

Belongs to the venom waprin family. In terms of tissue distribution, expressed by the venom gland.

The protein localises to the secreted. In terms of biological role, damages membranes of susceptible bacteria. Has no hemolytic activity. Not toxic to mice. Does not inhibit the proteinases elastase and cathepsin G. This chain is Supwaprin-a, found in Austrelaps superbus (Lowland copperhead snake).